The following is a 590-amino-acid chain: MLSTSTTNSSILPFRSRASSSTFIARPPANFNSIFTTSVRVFPISMSRYCVFPHTWERDHNVPGVPGVLRKVVPAAPIKNKPTCADSDELPEYLRDVLRSPVYDVVVESPVELTERLSDRLGVNFYVKREDRQRVFSFKLRGPYNMMSSLSHEEIDKGVITASAGNHAQGVPFPFPGRRLKCVAKIVMPTTTPNIKLDGVRALGADVVLWGHTFDEAKTHAVELCEKDGLRTIPPFEDPAVIKGQGTIGSEINRQIKRIDAVFVPVGGGGLIAGVAAFFKQIAPQTKIIVVEPYDAASMALSVHAEHRAKLSNVDTFADGATVAVIGEYTFARCQDVVDAMVLVANDGIGAAIKDVFDEGRNIVETSGAAGIAGMYCEMYRIKNDNMVGIVSGANMNFRKLHKVSELAVLGSGHEALLGTYMPGQKGCFKTMAGLVHGSLSFTEITYRFTSHRRSILVLMLKLEPWRYIEKMIEMMKYSGVTVLNISHNELAVIHGKHLVGGSAKVSDEVFVEFIIPEKADLKKFLEVLSPHWNLTLYRYRNQGDLKATILMVIASFLCEIVIRKNQIDDLGYPYEIDQYNDAFNLAVTE.

The N-terminal 44 residues, 1-44 (MLSTSTTNSSILPFRSRASSSTFIARPPANFNSIFTTSVRVFPI), are a transit peptide targeting the chloroplast. Lys-139 bears the N6-(pyridoxal phosphate)lysine mark. ACT-like domains are found at residues 416–488 (ALLG…NISH) and 509–580 (EVFV…IDQY).

It belongs to the serine/threonine dehydratase family. It depends on pyridoxal 5'-phosphate as a cofactor. In terms of tissue distribution, found at higher levels in flowers than in other organs.

It localises to the plastid. Its subcellular location is the chloroplast. The enzyme catalyses L-threonine = 2-oxobutanoate + NH4(+). The protein operates within amino-acid biosynthesis; L-isoleucine biosynthesis; 2-oxobutanoate from L-threonine: step 1/1. Its activity is regulated as follows. Allosterically inhibited by isoleucine. The protein is Threonine dehydratase biosynthetic, chloroplastic of Cicer arietinum (Chickpea).